A 124-amino-acid polypeptide reads, in one-letter code: ATP synthase epsilon chain (124 aa).

Belongs to the ATPase epsilon chain family. In terms of assembly, F-type ATPases have 2 components, CF(1) - the catalytic core - and CF(0) - the membrane proton channel. CF(1) has five subunits: alpha(3), beta(3), gamma(1), delta(1), epsilon(1). CF(0) has three main subunits: a, b and c.

The protein resides in the cell membrane. Its function is as follows. Produces ATP from ADP in the presence of a proton gradient across the membrane. This chain is ATP synthase epsilon chain, found in Corynebacterium glutamicum (strain ATCC 13032 / DSM 20300 / JCM 1318 / BCRC 11384 / CCUG 27702 / LMG 3730 / NBRC 12168 / NCIMB 10025 / NRRL B-2784 / 534).